Consider the following 697-residue polypeptide: Elongation factor G (697 aa).

Positions 8-283 (EHIRNIGICA…AVVDFLPSPT (276 aa)) constitute a tr-type G domain. GTP is bound by residues 17 to 24 (AHIDAGKT), 81 to 85 (DTPGH), and 135 to 138 (NKMD).

It belongs to the TRAFAC class translation factor GTPase superfamily. Classic translation factor GTPase family. EF-G/EF-2 subfamily.

It localises to the cytoplasm. In terms of biological role, catalyzes the GTP-dependent ribosomal translocation step during translation elongation. During this step, the ribosome changes from the pre-translocational (PRE) to the post-translocational (POST) state as the newly formed A-site-bound peptidyl-tRNA and P-site-bound deacylated tRNA move to the P and E sites, respectively. Catalyzes the coordinated movement of the two tRNA molecules, the mRNA and conformational changes in the ribosome. This Rickettsia massiliae (strain Mtu5) protein is Elongation factor G.